A 91-amino-acid chain; its full sequence is DNA-binding protein HRL53 (91 aa).

Residues 57-91 (ATKGRNPSTGAEVDIPARNVPKFTPGKGLKDAVNG) are disordered.

It belongs to the bacterial histone-like protein family.

Histone-like DNA-binding protein which is capable of wrapping DNA to stabilize it, and thus to prevent its denaturation under extreme environmental conditions. Binds to nod promoters and induces DNA binding. The protein is DNA-binding protein HRL53 of Rhizobium leguminosarum.